The sequence spans 141 residues: Oleosin 14.9 kDa (141 aa).

The segment covering 1–22 (MADQTRTHHEMISRDSTQEAHP) has biased composition (basic and acidic residues). The disordered stretch occupies residues 1–24 (MADQTRTHHEMISRDSTQEAHPKA). Residues 1-29 (MADQTRTHHEMISRDSTQEAHPKARQMVK) form a polar region. The segment at 30–141 (AATAVTAGGS…NIGVQHQQVS (112 aa)) is hydrophobic. The next 3 helical transmembrane spans lie at 38 to 58 (GSLL…LTVA), 60 to 80 (PLLV…ALII), and 81 to 101 (TGFL…SWLY).

Belongs to the oleosin family.

Its subcellular location is the lipid droplet. The protein localises to the membrane. Its function is as follows. May have a structural role to stabilize the lipid body during desiccation of the seed by preventing coalescence of the oil. Probably interacts with both lipid and phospholipid moieties of lipid bodies. May also provide recognition signals for specific lipase anchorage in lipolysis during seedling growth. This Arabidopsis thaliana (Mouse-ear cress) protein is Oleosin 14.9 kDa (OL3).